We begin with the raw amino-acid sequence, 309 residues long: MAPSHWRLILNGKSTDNLDLREAVGTLRKRGIQLDVRVTWEDGDAERYVGEAVADGVHTVVAAGGDGTLSEVAAALAHHEGDAATLPSLGLVPLGTANDFATAATLPIAPLEALTLIAERVAQPVDLLRIDADHGPHWCANVASGGFGTQVTVETDEGLKKMLGGLAYLITGMSRLGRIDPISARFSGPEFSWEGEFIALGLGNGRQAGGGQALCPEALIDDGLLDVTIVPDLDGEVAATLGTLVTGGKQAALERVAVRARVPWLDIVSQQPLTLNLDGEPETSRHFRIECVPARLRMHLPGECPLLGG.

Positions 1 to 134 constitute a DAGKc domain; sequence MAPSHWRLIL…VDLLRIDADH (134 aa). Residues threonine 39, 65–71, and threonine 96 contribute to the ATP site; that span reads GDGTLSE. Residues leucine 219, aspartate 222, and leucine 224 each coordinate Mg(2+). Glutamate 280 acts as the Proton acceptor in catalysis.

Belongs to the diacylglycerol/lipid kinase family. YegS lipid kinase subfamily. The cofactor is Mg(2+). Ca(2+) is required as a cofactor.

It localises to the cytoplasm. In terms of biological role, probably phosphorylates lipids; the in vivo substrate is unknown. This chain is Probable lipid kinase YegS-like, found in Xanthomonas axonopodis pv. citri (strain 306).